A 64-amino-acid polypeptide reads, in one-letter code: Large ribosomal subunit protein bL32 (64 aa).

Residues 1-16 (MAVQKSRKTRSRRGMR) are compositionally biased toward basic residues. Positions 1-64 (MAVQKSRKTR…TPKESYEDEE (64 aa)) are disordered.

It belongs to the bacterial ribosomal protein bL32 family.

The polypeptide is Large ribosomal subunit protein bL32 (Coxiella burnetii (strain CbuK_Q154) (Coxiella burnetii (strain Q154))).